Consider the following 344-residue polypeptide: MIKVGIVGGTGYTGVELLRLLAQHPQAEVAVITSRSEAGVAVADMYPNLRGHYDGLAFSVPDSKALGACDVVFFATPHGVAHALAGELLAAGTKVIDLSADFRLQDATEWGKWYGQPHGAPELLKDAVYGLPEVNREKIRQARLIAVPGCYPTATQLGFLPLLEAGLADPSRLIADCKSGVSGAGRGAAVGSLFCEAGESMKAYAVKGHRHLPEISQGLRLAAGKDIGLTFVPHLTPMIRGIHATLYANVVDTSVDLQALFEKRYADEPFVDVMPAGSHPETRSVRGANVCRIAVHRPQGGDLVVVLSVIDNLVKGASGQAVQNLNILFGLDERMGLSHAGLLP.

The active site involves C150.

The protein belongs to the NAGSA dehydrogenase family. Type 1 subfamily.

Its subcellular location is the cytoplasm. It carries out the reaction N-acetyl-L-glutamate 5-semialdehyde + phosphate + NADP(+) = N-acetyl-L-glutamyl 5-phosphate + NADPH + H(+). It participates in amino-acid biosynthesis; L-arginine biosynthesis; N(2)-acetyl-L-ornithine from L-glutamate: step 3/4. Its function is as follows. Catalyzes the NADPH-dependent reduction of N-acetyl-5-glutamyl phosphate to yield N-acetyl-L-glutamate 5-semialdehyde. In Pseudomonas putida (strain ATCC 47054 / DSM 6125 / CFBP 8728 / NCIMB 11950 / KT2440), this protein is N-acetyl-gamma-glutamyl-phosphate reductase 1.